The following is a 158-amino-acid chain: Ribonuclease H (158 aa).

The RNase H type-1 domain maps to 3–144 (ELKLIHIFTD…CDQLARAAAE (142 aa)). Residues aspartate 12, glutamate 50, aspartate 72, and aspartate 136 each coordinate Mg(2+). Positions 137 to 158 (QLARAAAEASPTQVDEGYQPES) are disordered.

It belongs to the RNase H family. Monomer. Mg(2+) is required as a cofactor.

The protein resides in the cytoplasm. The catalysed reaction is Endonucleolytic cleavage to 5'-phosphomonoester.. In terms of biological role, endonuclease that specifically degrades the RNA of RNA-DNA hybrids. This Shewanella sp. (strain ANA-3) protein is Ribonuclease H.